The chain runs to 331 residues: MEIIKISPRGYCYGVIDAMVIAKNASLDPNLPRPIHILGMIVHNKHVTDAFESIGIYTVDGANREEILDKITTGTVIFTAHGVSPSVKAKAAAKGLTTIDATCPDVLHTYNLILEKQAAGYEIIYIGKKGHPEPEGAYGTAPDVVHLVETKADIDALSLLSDNIFVTNQTTMSKWDVADLMDYIKEKFPKAIQHQEICMATQVRQEAVAVQAKGADLTIVVGDPRSNNTARLAQVSIEKAGTKAYRIADITELDIEWIKDAKKVAVTAGASTPTQLVREVLLFLEQFDAADKTTWKRAHNKDFERILPKMKNKYMAEKRRQRLAHLKNGGS.

C12 serves as a coordination point for [4Fe-4S] cluster. The (2E)-4-hydroxy-3-methylbut-2-enyl diphosphate site is built by H43 and H81. Dimethylallyl diphosphate-binding residues include H43 and H81. Isopentenyl diphosphate contacts are provided by H43 and H81. [4Fe-4S] cluster is bound at residue C103. (2E)-4-hydroxy-3-methylbut-2-enyl diphosphate is bound at residue H131. Residue H131 participates in dimethylallyl diphosphate binding. Position 131 (H131) interacts with isopentenyl diphosphate. E133 serves as the catalytic Proton donor. Position 170 (T170) interacts with (2E)-4-hydroxy-3-methylbut-2-enyl diphosphate. C198 is a [4Fe-4S] cluster binding site. The (2E)-4-hydroxy-3-methylbut-2-enyl diphosphate site is built by S226, N228, and S271. Positions 226, 228, and 271 each coordinate dimethylallyl diphosphate. The isopentenyl diphosphate site is built by S226, N228, and S271.

It belongs to the IspH family. Requires [4Fe-4S] cluster as cofactor.

The catalysed reaction is isopentenyl diphosphate + 2 oxidized [2Fe-2S]-[ferredoxin] + H2O = (2E)-4-hydroxy-3-methylbut-2-enyl diphosphate + 2 reduced [2Fe-2S]-[ferredoxin] + 2 H(+). It carries out the reaction dimethylallyl diphosphate + 2 oxidized [2Fe-2S]-[ferredoxin] + H2O = (2E)-4-hydroxy-3-methylbut-2-enyl diphosphate + 2 reduced [2Fe-2S]-[ferredoxin] + 2 H(+). It functions in the pathway isoprenoid biosynthesis; dimethylallyl diphosphate biosynthesis; dimethylallyl diphosphate from (2E)-4-hydroxy-3-methylbutenyl diphosphate: step 1/1. The protein operates within isoprenoid biosynthesis; isopentenyl diphosphate biosynthesis via DXP pathway; isopentenyl diphosphate from 1-deoxy-D-xylulose 5-phosphate: step 6/6. Catalyzes the conversion of 1-hydroxy-2-methyl-2-(E)-butenyl 4-diphosphate (HMBPP) into a mixture of isopentenyl diphosphate (IPP) and dimethylallyl diphosphate (DMAPP). Acts in the terminal step of the DOXP/MEP pathway for isoprenoid precursor biosynthesis. This Listeria monocytogenes serotype 4b (strain CLIP80459) protein is 4-hydroxy-3-methylbut-2-enyl diphosphate reductase.